We begin with the raw amino-acid sequence, 264 residues long: MLMAVDIGNTQTVLGYFEGERLRASWRMTTEPYRSPDEVGAACAALFALRGLSLEDADAMIVSSVVPDLTGTYRHLAADILQVPFYAVGPEMDLGMENRYDDPSAVGADRLVNAVAARRYYGAPAIIADSGTATTVCAVDAGGAYRGGAILPGLYVSMDALASRTAKLPRVDLEEEPPRAIATNTPDSIRSGFIYGYAGAIDALIRRFKEELAAEGETEGLRVVATGGLSPVISRYCREIEVLDPDLTLKGLQVLYALNASRAR.

6–13 (DIGNTQTV) contacts ATP. Residues tyrosine 100 and 107–110 (GADR) each bind substrate. Aspartate 109 (proton acceptor) is an active-site residue. Aspartate 129 provides a ligand contact to K(+). ATP is bound at residue threonine 132. Threonine 185 contributes to the substrate binding site.

It belongs to the type III pantothenate kinase family. As to quaternary structure, homodimer. Requires NH4(+) as cofactor. It depends on K(+) as a cofactor.

The protein resides in the cytoplasm. It catalyses the reaction (R)-pantothenate + ATP = (R)-4'-phosphopantothenate + ADP + H(+). It functions in the pathway cofactor biosynthesis; coenzyme A biosynthesis; CoA from (R)-pantothenate: step 1/5. In terms of biological role, catalyzes the phosphorylation of pantothenate (Pan), the first step in CoA biosynthesis. The polypeptide is Type III pantothenate kinase (Rubrobacter xylanophilus (strain DSM 9941 / JCM 11954 / NBRC 16129 / PRD-1)).